The primary structure comprises 416 residues: Glutamyl-tRNA reductase (416 aa).

Substrate-binding positions include 49-52, Ser-105, 110-112, and Gln-116; these read TCNR and ETQ. Catalysis depends on Cys-50, which acts as the Nucleophile. Residue 185-190 coordinates NADP(+); the sequence is GAGEMI.

It belongs to the glutamyl-tRNA reductase family. Homodimer.

It catalyses the reaction (S)-4-amino-5-oxopentanoate + tRNA(Glu) + NADP(+) = L-glutamyl-tRNA(Glu) + NADPH + H(+). Its pathway is porphyrin-containing compound metabolism; protoporphyrin-IX biosynthesis; 5-aminolevulinate from L-glutamyl-tRNA(Glu): step 1/2. Functionally, catalyzes the NADPH-dependent reduction of glutamyl-tRNA(Glu) to glutamate 1-semialdehyde (GSA). In Thiobacillus denitrificans (strain ATCC 25259 / T1), this protein is Glutamyl-tRNA reductase.